The chain runs to 161 residues: MPLKIAVYPGSFDPITYGHLDIIERGLRIFDKIIVAVAKNSEKNSLFPTDERIALIKEVLGDSERAEVDTFTGLLVDYVRDQGATVIIRGLRAVSDFEYEFQLAQMNRSITQDIETLFMMTSVPYSYLSSSIVKEVSSLNGPIEGLVPPAVKKALDAKFNR.

Position 11 (serine 11) interacts with substrate. Residues 11-12 and histidine 19 contribute to the ATP site; that span reads SF. Residues lysine 43, leucine 75, and arginine 89 each contribute to the substrate site. ATP contacts are provided by residues 90–92, glutamate 100, and 125–131; these read GLR and YSYLSSS.

This sequence belongs to the bacterial CoaD family. As to quaternary structure, homohexamer. Mg(2+) is required as a cofactor.

The protein localises to the cytoplasm. The catalysed reaction is (R)-4'-phosphopantetheine + ATP + H(+) = 3'-dephospho-CoA + diphosphate. The protein operates within cofactor biosynthesis; coenzyme A biosynthesis; CoA from (R)-pantothenate: step 4/5. Functionally, reversibly transfers an adenylyl group from ATP to 4'-phosphopantetheine, yielding dephospho-CoA (dPCoA) and pyrophosphate. This is Phosphopantetheine adenylyltransferase from Geotalea daltonii (strain DSM 22248 / JCM 15807 / FRC-32) (Geobacter daltonii).